Reading from the N-terminus, the 416-residue chain is Kynureninase (416 aa).

Pyridoxal 5'-phosphate is bound by residues Thr-97, Ser-98, 129-132 (FPTD), Thr-172, Asp-201, His-204, and Tyr-226. An N6-(pyridoxal phosphate)lysine modification is found at Lys-227. The pyridoxal 5'-phosphate site is built by Trp-256 and Thr-282.

It belongs to the kynureninase family. Homodimer. The cofactor is pyridoxal 5'-phosphate.

It catalyses the reaction L-kynurenine + H2O = anthranilate + L-alanine + H(+). The catalysed reaction is 3-hydroxy-L-kynurenine + H2O = 3-hydroxyanthranilate + L-alanine + H(+). It participates in amino-acid degradation; L-kynurenine degradation; L-alanine and anthranilate from L-kynurenine: step 1/1. Its pathway is cofactor biosynthesis; NAD(+) biosynthesis; quinolinate from L-kynurenine: step 2/3. Catalyzes the cleavage of L-kynurenine (L-Kyn) and L-3-hydroxykynurenine (L-3OHKyn) into anthranilic acid (AA) and 3-hydroxyanthranilic acid (3-OHAA), respectively. The sequence is that of Kynureninase from Pseudomonas fluorescens.